A 938-amino-acid chain; its full sequence is Isoleucine--tRNA ligase (938 aa).

The short motif at 58-68 (PYANGSIHIGH) is the 'HIGH' region element. The residue at position 183 (Lys183) is an N6-acetyllysine. Glu561 contributes to the L-isoleucyl-5'-AMP binding site. Residues 602-606 (KMSKS) carry the 'KMSKS' region motif. Lys605 is an ATP binding site. Residues Cys901, Cys904, Cys921, and Cys924 each contribute to the Zn(2+) site.

Belongs to the class-I aminoacyl-tRNA synthetase family. IleS type 1 subfamily. Monomer. Requires Zn(2+) as cofactor.

Its subcellular location is the cytoplasm. The catalysed reaction is tRNA(Ile) + L-isoleucine + ATP = L-isoleucyl-tRNA(Ile) + AMP + diphosphate. Catalyzes the attachment of isoleucine to tRNA(Ile). As IleRS can inadvertently accommodate and process structurally similar amino acids such as valine, to avoid such errors it has two additional distinct tRNA(Ile)-dependent editing activities. One activity is designated as 'pretransfer' editing and involves the hydrolysis of activated Val-AMP. The other activity is designated 'posttransfer' editing and involves deacylation of mischarged Val-tRNA(Ile). This is Isoleucine--tRNA ligase from Escherichia coli O45:K1 (strain S88 / ExPEC).